The sequence spans 547 residues: Malolactic enzyme (547 aa).

The Proton donor role is filled by Tyr-92. Lys-165 serves as the catalytic Proton acceptor. Substrate is bound at residue Lys-165. Mn(2+) contacts are provided by Glu-236, Asp-237, and Asp-260. NAD(+) contacts are provided by residues 293–296 (AGTA), Asn-405, and Asn-450. Asn-450 is a binding site for substrate.

This sequence belongs to the malic enzymes family. In terms of assembly, homodimer. Requires Mn(2+) as cofactor. NAD(+) is required as a cofactor.

The enzyme catalyses (S)-malate + H(+) = (S)-lactate + CO2. Its function is as follows. Involved in the malolactic fermentation (MLF) of wine, which results in a natural decrease in acidity and favorable changes in wine flavors. Catalyzes the decarboxylation of L-malate to L-lactate. The sequence is that of Malolactic enzyme from Lactiplantibacillus plantarum (strain ATCC BAA-793 / NCIMB 8826 / WCFS1) (Lactobacillus plantarum).